Reading from the N-terminus, the 33-residue chain is Photosystem II reaction center protein Psb30 (33 aa).

Residues Val-5–Leu-25 form a helical membrane-spanning segment.

This sequence belongs to the Psb30/Ycf12 family. PSII is composed of 1 copy each of membrane proteins PsbA, PsbB, PsbC, PsbD, PsbE, PsbF, PsbH, PsbI, PsbJ, PsbK, PsbL, PsbM, PsbT, PsbX, PsbY, PsbZ, Psb30/Ycf12, peripheral proteins of the oxygen-evolving complex and a large number of cofactors. It forms dimeric complexes.

It localises to the plastid. It is found in the chloroplast thylakoid membrane. A core subunit of photosystem II (PSII), probably helps stabilize the reaction center. In Oltmannsiellopsis viridis (Marine flagellate), this protein is Photosystem II reaction center protein Psb30.